A 427-amino-acid chain; its full sequence is Glutamate-1-semialdehyde 2,1-aminomutase (427 aa).

K265 bears the N6-(pyridoxal phosphate)lysine mark.

It belongs to the class-III pyridoxal-phosphate-dependent aminotransferase family. HemL subfamily. In terms of assembly, homodimer. It depends on pyridoxal 5'-phosphate as a cofactor.

It is found in the cytoplasm. The catalysed reaction is (S)-4-amino-5-oxopentanoate = 5-aminolevulinate. It participates in porphyrin-containing compound metabolism; protoporphyrin-IX biosynthesis; 5-aminolevulinate from L-glutamyl-tRNA(Glu): step 2/2. This is Glutamate-1-semialdehyde 2,1-aminomutase from Pseudomonas syringae pv. tomato (strain ATCC BAA-871 / DC3000).